The sequence spans 335 residues: Phosphate acyltransferase (335 aa).

The protein belongs to the PlsX family. Homodimer. Probably interacts with PlsY.

It is found in the cytoplasm. The enzyme catalyses a fatty acyl-[ACP] + phosphate = an acyl phosphate + holo-[ACP]. Its pathway is lipid metabolism; phospholipid metabolism. Its function is as follows. Catalyzes the reversible formation of acyl-phosphate (acyl-PO(4)) from acyl-[acyl-carrier-protein] (acyl-ACP). This enzyme utilizes acyl-ACP as fatty acyl donor, but not acyl-CoA. In Brevibacillus brevis (strain 47 / JCM 6285 / NBRC 100599), this protein is Phosphate acyltransferase.